A 369-amino-acid polypeptide reads, in one-letter code: Anhydro-N-acetylmuramic acid kinase (369 aa).

Residue 12-19 (GTSLDGVD) participates in ATP binding.

It belongs to the anhydro-N-acetylmuramic acid kinase family.

It carries out the reaction 1,6-anhydro-N-acetyl-beta-muramate + ATP + H2O = N-acetyl-D-muramate 6-phosphate + ADP + H(+). Its pathway is amino-sugar metabolism; 1,6-anhydro-N-acetylmuramate degradation. It functions in the pathway cell wall biogenesis; peptidoglycan recycling. Its function is as follows. Catalyzes the specific phosphorylation of 1,6-anhydro-N-acetylmuramic acid (anhMurNAc) with the simultaneous cleavage of the 1,6-anhydro ring, generating MurNAc-6-P. Is required for the utilization of anhMurNAc either imported from the medium or derived from its own cell wall murein, and thus plays a role in cell wall recycling. The protein is Anhydro-N-acetylmuramic acid kinase of Escherichia coli O7:K1 (strain IAI39 / ExPEC).